The primary structure comprises 204 residues: Phosphoribosyl-dephospho-CoA transferase (204 aa).

Catalysis depends on residues aspartate 129 and aspartate 131.

The protein belongs to the MdcG family.

The catalysed reaction is apo-[malonate decarboxylase ACP] + 2'-(5''-triphospho-alpha-D-ribosyl)-3'-dephospho-CoA = holo-[malonate decarboxylase ACP] + diphosphate. Functionally, transfers 2'-(5-triphosphoribosyl)-3'-dephosphocoenzyme-A to the apo-[acyl-carrier-protein] of the malonate decarboxylase to yield holo-[acyl-carrier-protein]. The polypeptide is Phosphoribosyl-dephospho-CoA transferase (Pseudomonas putida (strain W619)).